A 194-amino-acid polypeptide reads, in one-letter code: E3 ubiquitin-protein ligase RNF4 (194 aa).

Basic residues predominate over residues 1-12; sequence MSTRNPQRKRRG. Residues 1–20 form a required for ubiquitination activity region; that stretch reads MSTRNPQRKRRGGTVNSRQT. Residues 1-39 are disordered; the sequence is MSTRNPQRKRRGGTVNSRQTQKRTRETTSTPEVSLETEP. A mediates interaction with TRPS1 region spans residues 6 to 65; it reads PQRKRRGGTVNSRQTQKRTRETTSTPEVSLETEPIELVETVGDEIVDLTCESLEPVVVDL. Residues 40–43 carry the SUMO interaction motif 1; mediates the binding to polysumoylated substrates motif; sequence IELV. Positions 50 to 53 match the SUMO interaction motif 2; mediates the binding to polysumoylated substrates motif; sequence IVDL. Positions 61–63 match the SUMO interaction motif 3; mediates the binding to polysumoylated substrates motif; sequence VVV. The short motif at 71-74 is the SUMO interaction motif 4; mediates the binding to polysumoylated substrates element; that stretch reads VVIV. A phosphoserine mark is found at S98 and S99. A disordered region spans residues 110–130; the sequence is VYVTTHTPRSTKDDGATGPRP. Positions 136, 139, 158, 160, 163, 166, 177, and 180 each coordinate Zn(2+). The RING-type zinc-finger motif lies at 136–181; it reads CPICMDGYSEIVQNGRLIVSTECGHVFCSQCLRDSLKNANTCPTCR.

In terms of assembly, homodimer (via RING-type zinc finger domain). Interacts with GSC2. Interacts with AR/the androgen receptor and TBP. Interacts with TCF20. Interacts with PATZ1. Interacts with TRPS1; negatively regulates TRPS1 transcriptional repressor activity. Interacts with PML (isoform PML-1, isoform PML-2, isoform PML-3, isoform PML-4, isoform PML-5 and isoform PML-6). Interacts with PRDM1/Blimp-1. Post-translationally, sumoylated; conjugated by one or two SUMO1 moieties. In terms of processing, autoubiquitinated. In the embryo, expressed primarily in the developing nervous system with strong expression in the dorsal root ganglia and gonads. Ubiquitously expressed in the adult.

It is found in the cytoplasm. The protein localises to the nucleus. Its subcellular location is the PML body. It catalyses the reaction S-ubiquitinyl-[E2 ubiquitin-conjugating enzyme]-L-cysteine + [acceptor protein]-L-lysine = [E2 ubiquitin-conjugating enzyme]-L-cysteine + N(6)-ubiquitinyl-[acceptor protein]-L-lysine.. It participates in protein modification; protein ubiquitination. In terms of biological role, E3 ubiquitin-protein ligase which binds polysumoylated chains covalently attached to proteins and mediates 'Lys-6'-, 'Lys-11'-, 'Lys-48'- and 'Lys-63'-linked polyubiquitination of those substrates and their subsequent targeting to the proteasome for degradation. Regulates the degradation of several proteins including PML and the transcriptional activator PEA3. Involved in chromosome alignment and spindle assembly, it regulates the kinetochore CENPH-CENPI-CENPK complex by targeting polysumoylated CENPI to proteasomal degradation. Regulates the cellular responses to hypoxia and heat shock through degradation of respectively EPAS1 and PARP1. Alternatively, it may also bind DNA/nucleosomes and have a more direct role in the regulation of transcription for instance enhancing basal transcription and steroid receptor-mediated transcriptional activation. Catalyzes ubiquitination of sumoylated PARP1 in response to PARP1 trapping to chromatin, leading to PARP1 removal from chromatin by VCP/p97. The chain is E3 ubiquitin-protein ligase RNF4 from Mus musculus (Mouse).